We begin with the raw amino-acid sequence, 262 residues long: Putative glycyl-radical enzyme activating enzyme HI_0520 (262 aa).

The Radical SAM core domain occupies 20–262 (VEGQGNRSSI…CGINKILTIL (243 aa)). [4Fe-4S] cluster is bound by residues Cys-34, Cys-38, and Cys-41. S-adenosyl-L-methionine is bound by residues 40–42 (YCH), Gly-81, and 130–132 (DLK).

Belongs to the organic radical-activating enzymes family. The cofactor is [4Fe-4S] cluster.

The catalysed reaction is glycyl-[protein] + reduced [flavodoxin] + S-adenosyl-L-methionine = glycin-2-yl radical-[protein] + semiquinone [flavodoxin] + 5'-deoxyadenosine + L-methionine + H(+). In Haemophilus influenzae (strain ATCC 51907 / DSM 11121 / KW20 / Rd), this protein is Putative glycyl-radical enzyme activating enzyme HI_0520.